We begin with the raw amino-acid sequence, 208 residues long: 3-isopropylmalate dehydratase small subunit 2 (208 aa).

The segment at 163 to 208 (EGERLDNASTSAGHGHAGTPLGDDPAKEDGPRPEQASGHQKEEHHA) is disordered.

The protein belongs to the LeuD family. LeuD type 2 subfamily. In terms of assembly, heterodimer of LeuC and LeuD.

It catalyses the reaction (2R,3S)-3-isopropylmalate = (2S)-2-isopropylmalate. It participates in amino-acid biosynthesis; L-leucine biosynthesis; L-leucine from 3-methyl-2-oxobutanoate: step 2/4. Catalyzes the isomerization between 2-isopropylmalate and 3-isopropylmalate, via the formation of 2-isopropylmaleate. The chain is 3-isopropylmalate dehydratase small subunit 2 (leuD2) from Deinococcus radiodurans (strain ATCC 13939 / DSM 20539 / JCM 16871 / CCUG 27074 / LMG 4051 / NBRC 15346 / NCIMB 9279 / VKM B-1422 / R1).